The chain runs to 365 residues: UDP-N-acetylglucosamine--N-acetylmuramyl-(pentapeptide) pyrophosphoryl-undecaprenol N-acetylglucosamine transferase (365 aa).

UDP-N-acetyl-alpha-D-glucosamine contacts are provided by residues 20-22 (TGG), asparagine 132, arginine 168, serine 196, isoleucine 253, and glutamine 298.

It belongs to the glycosyltransferase 28 family. MurG subfamily.

Its subcellular location is the cell inner membrane. The catalysed reaction is di-trans,octa-cis-undecaprenyl diphospho-N-acetyl-alpha-D-muramoyl-L-alanyl-D-glutamyl-meso-2,6-diaminopimeloyl-D-alanyl-D-alanine + UDP-N-acetyl-alpha-D-glucosamine = di-trans,octa-cis-undecaprenyl diphospho-[N-acetyl-alpha-D-glucosaminyl-(1-&gt;4)]-N-acetyl-alpha-D-muramoyl-L-alanyl-D-glutamyl-meso-2,6-diaminopimeloyl-D-alanyl-D-alanine + UDP + H(+). It participates in cell wall biogenesis; peptidoglycan biosynthesis. Functionally, cell wall formation. Catalyzes the transfer of a GlcNAc subunit on undecaprenyl-pyrophosphoryl-MurNAc-pentapeptide (lipid intermediate I) to form undecaprenyl-pyrophosphoryl-MurNAc-(pentapeptide)GlcNAc (lipid intermediate II). This chain is UDP-N-acetylglucosamine--N-acetylmuramyl-(pentapeptide) pyrophosphoryl-undecaprenol N-acetylglucosamine transferase, found in Ralstonia nicotianae (strain ATCC BAA-1114 / GMI1000) (Ralstonia solanacearum).